A 490-amino-acid chain; its full sequence is Glutamyl-tRNA(Gln) amidotransferase subunit A (490 aa).

Active-site charge relay system residues include lysine 78 and serine 159. The Acyl-ester intermediate role is filled by serine 183.

The protein belongs to the amidase family. GatA subfamily. As to quaternary structure, heterotrimer of A, B and C subunits.

It carries out the reaction L-glutamyl-tRNA(Gln) + L-glutamine + ATP + H2O = L-glutaminyl-tRNA(Gln) + L-glutamate + ADP + phosphate + H(+). Functionally, allows the formation of correctly charged Gln-tRNA(Gln) through the transamidation of misacylated Glu-tRNA(Gln) in organisms which lack glutaminyl-tRNA synthetase. The reaction takes place in the presence of glutamine and ATP through an activated gamma-phospho-Glu-tRNA(Gln). This is Glutamyl-tRNA(Gln) amidotransferase subunit A from Paramagnetospirillum magneticum (strain ATCC 700264 / AMB-1) (Magnetospirillum magneticum).